Here is a 30-residue protein sequence, read N- to C-terminus: uncharacterized protein (30 aa).

The tract at residues 1 to 30 is disordered; sequence MHLSTLPNVPWPNRSFTTKRPPLPNMSFSW.

This is an uncharacterized protein from Saccharomyces cerevisiae (strain ATCC 204508 / S288c) (Baker's yeast).